The chain runs to 138 residues: Large ribosomal subunit protein uL16 (138 aa).

A compositionally biased stretch (basic residues) spans 1 to 16 (MLIPKRVKYRRQHRPT). Positions 1–23 (MLIPKRVKYRRQHRPTRSGISKG) are disordered.

Belongs to the universal ribosomal protein uL16 family. In terms of assembly, part of the 50S ribosomal subunit.

Binds 23S rRNA and is also seen to make contacts with the A and possibly P site tRNAs. This Corynebacterium glutamicum (strain R) protein is Large ribosomal subunit protein uL16.